A 124-amino-acid chain; its full sequence is UPF0299 membrane protein VP1300 (124 aa).

4 helical membrane-spanning segments follow: residues 9 to 29, 35 to 55, 72 to 92, and 95 to 115; these read LIQL…GITI, VSVP…TLGL, MILL…MLLA, and LPII…LAWL.

The protein belongs to the UPF0299 family.

It localises to the cell inner membrane. This Vibrio parahaemolyticus serotype O3:K6 (strain RIMD 2210633) protein is UPF0299 membrane protein VP1300.